The chain runs to 223 residues: Ribonuclease T (223 aa).

The 175-residue stretch at 20–194 folds into the Exonuclease domain; it reads VVIDVETAGF…YDTERTAELF (175 aa). The Mg(2+) site is built by Asp23, Glu25, His181, and Asp186. The active-site Proton donor/acceptor is the His181.

This sequence belongs to the RNase T family. As to quaternary structure, homodimer. It depends on Mg(2+) as a cofactor.

Trims short 3' overhangs of a variety of RNA species, leaving a one or two nucleotide 3' overhang. Responsible for the end-turnover of tRNA: specifically removes the terminal AMP residue from uncharged tRNA (tRNA-C-C-A). Also appears to be involved in tRNA biosynthesis. The polypeptide is Ribonuclease T (Shewanella baltica (strain OS185)).